A 279-amino-acid chain; its full sequence is Large ribosomal subunit protein uL2 (279 aa).

Positions 223-279 (VAMNPVDHPMGGGEGRSSGGHPRSRKGLYAKGGKTRSANKYSKNMIVKKRVNKRLSK) are disordered. Over residues 268-279 (IVKKRVNKRLSK) the composition is skewed to basic residues.

This sequence belongs to the universal ribosomal protein uL2 family. In terms of assembly, part of the 50S ribosomal subunit. Forms a bridge to the 30S subunit in the 70S ribosome.

One of the primary rRNA binding proteins. Required for association of the 30S and 50S subunits to form the 70S ribosome, for tRNA binding and peptide bond formation. It has been suggested to have peptidyltransferase activity; this is somewhat controversial. Makes several contacts with the 16S rRNA in the 70S ribosome. The sequence is that of Large ribosomal subunit protein uL2 from Cytophaga hutchinsonii (strain ATCC 33406 / DSM 1761 / CIP 103989 / NBRC 15051 / NCIMB 9469 / D465).